Reading from the N-terminus, the 623-residue chain is AM-toxin biosynthesis protein 12-2 (623 aa).

The segment at 110 to 129 is disordered; sequence TIPGTSQAKNTEPDHQASGL.

It functions in the pathway mycotoxin biosynthesis. Functionally, part of the gene clusters that mediate the biosynthesis of AM-toxins, host-selective toxins (HSTs) causing Alternaria blotch on apple, a worldwide distributed disease. AM-toxins are cyclic depsipeptides containing the 3 residues 2-hydroxy-isovaleric acid (2-HIV), dehydroalanine, L-alanine which are common for all 3 AM-toxins I to III. The fourth precursor is L-alpha-amino-methoxyphenyl-valeric acid (L-Amv) for AM-toxin I, L-alpha-amino-phenyl-valeric acid (L-Apv) for AM-toxin II, and L-alpha-amino-hydroxyphenyl-valeric acid (L-Ahv) for AM-toxin III. AM-toxins have two target sites for affecting susceptible apple cells; they cause invagination of the plasma membrane and electrolyte loss and chloroplast disorganization. The non-ribosomal peptide synthetase AMT1 contains 4 catalytic modules and is responsible for activation of each residue in AM-toxin. The aldo-keto reductase AMT2 catalyzes the conversion of 2-keto-isovaleric acid (2-KIV) to 2-hydroxy-isovaleric acid (2-HIV), one of the precursor residues incorporated by AMT1 during AM-toxin biosynthesis, by reduction of its ketone to an alcohol. The cytochrome P450 monooxygenase AMT3 and the thioesterase AMT4 are also important for AM-toxin production, but their exact function within the AM-toxin biosynthesis are not known yet. Up to 21 proteins (including AMT1 to AMT4) are predicted to be involved in AM-toxin biosynthesis since their expression ishighly up-regulated in AM-toxin-producing cultures. This is AM-toxin biosynthesis protein 12-2 from Alternaria alternata (Alternaria rot fungus).